We begin with the raw amino-acid sequence, 133 residues long: Gamma-crystallin 1 (133 aa).

The Beta/gamma crystallin 'Greek key' 2 domain maps to 1–41; sequence WMLYEHPNYTGHQYFLRRGEYPDFQQWMGLNDSIRSCRVIP. The interval 42-46 is connecting peptide; that stretch reads QHRGS. Beta/gamma crystallin 'Greek key' domains are found at residues 47-87 and 88-130; these read FRLR…NVLE and GHWI…RRVQ.

The protein belongs to the beta/gamma-crystallin family. As to quaternary structure, monomer.

In terms of biological role, crystallins are the dominant structural components of the vertebrate eye lens. The protein is Gamma-crystallin 1 of Rana temporaria (European common frog).